The following is a 217-amino-acid chain: MSFDFYNELSRGCQAMGIELDRPGQERLYTYFVELKKWSQKVNLIAKGTGEAEIVENHFLDSLALLPLLPEGAGLLDIGTGAGLPGLICKAARPDLRLFLVEPRAKRVSFLRHIVRTLQLEGVEIYCSRIEDEPELFASEDISYITSRAVSDISGFLAMTEGFKSPHIRRLCLKGPRWQEELAEADEVLAAGNYQREKVVEYLLPFSGAERAIVVLR.

S-adenosyl-L-methionine is bound by residues Gly79, Leu84, 130-131, and Arg148; that span reads IE.

Belongs to the methyltransferase superfamily. RNA methyltransferase RsmG family.

It is found in the cytoplasm. It carries out the reaction guanosine(527) in 16S rRNA + S-adenosyl-L-methionine = N(7)-methylguanosine(527) in 16S rRNA + S-adenosyl-L-homocysteine. Functionally, specifically methylates the N7 position of guanine in position 527 of 16S rRNA. This Desulfotalea psychrophila (strain LSv54 / DSM 12343) protein is Ribosomal RNA small subunit methyltransferase G.